Reading from the N-terminus, the 294-residue chain is Cytidine deaminase (294 aa).

CMP/dCMP-type deaminase domains follow at residues aspartate 48–lysine 168 and leucine 186–alanine 294. Substrate is bound at residue asparagine 89 to glutamate 91. Histidine 102 is a binding site for Zn(2+). The active-site Proton donor is the glutamate 104. Cysteine 129 and cysteine 132 together coordinate Zn(2+).

The protein belongs to the cytidine and deoxycytidylate deaminase family. In terms of assembly, homodimer. The cofactor is Zn(2+).

It catalyses the reaction cytidine + H2O + H(+) = uridine + NH4(+). The enzyme catalyses 2'-deoxycytidine + H2O + H(+) = 2'-deoxyuridine + NH4(+). In terms of biological role, this enzyme scavenges exogenous and endogenous cytidine and 2'-deoxycytidine for UMP synthesis. The sequence is that of Cytidine deaminase from Shigella dysenteriae serotype 1 (strain Sd197).